Reading from the N-terminus, the 247-residue chain is Large ribosomal subunit protein uL30 (247 aa).

This sequence belongs to the universal ribosomal protein uL30 family.

In Sus scrofa (Pig), this protein is Large ribosomal subunit protein uL30 (RPL7L1).